The chain runs to 255 residues: Taurine import ATP-binding protein TauB (255 aa).

The ABC transporter domain occupies 2–229 (LQISHLYADY…RFVAGESSRS (228 aa)). ATP is bound at residue 34–41 (GPSGCGKT).

Belongs to the ABC transporter superfamily. Taurine importer (TC 3.A.1.17.1) family. In terms of assembly, the complex is composed of two ATP-binding proteins (TauB), two transmembrane proteins (TauC) and a solute-binding protein (TauA).

The protein resides in the cell inner membrane. It carries out the reaction taurine(out) + ATP + H2O = taurine(in) + ADP + phosphate + H(+). In terms of biological role, part of the ABC transporter complex TauABC involved in taurine import. Responsible for energy coupling to the transport system. This Escherichia coli O157:H7 protein is Taurine import ATP-binding protein TauB.